The following is a 393-amino-acid chain: Protein TsgA (393 aa).

Helical transmembrane passes span 11–31, 51–71, 78–98, 101–121, 140–160, 162–182, 206–226, 245–265, 273–293, 297–317, 332–352, and 361–381; these read WISFLSYALTGALVIVTGMVM, FLNAGILISIFLNAWLMEIVP, FGFLLMVLAVAGLMFSHSLAL, TAMFILGVVSGITMSIGTFLI, FFSMAGMIFPMIAAFLLAHSI, WYWVYACIGLVYVAIFILTFG, IGVLFLSVAALCYILGQLGFI, TLVSNFWMSYMVGMWAFSFIL, ILTVLAGLAAILMYVFNTGTP, AWSILALGFFSSAIYTTIITL, FVLTCGTIGTMLTFVVTGPIV, and LLTANGLYAVVFVMCFLLGFV.

It belongs to the major facilitator superfamily. TsgA family.

The protein localises to the cell inner membrane. In Shigella boydii serotype 18 (strain CDC 3083-94 / BS512), this protein is Protein TsgA.